A 545-amino-acid chain; its full sequence is Mesoderm induction early response protein 2 (545 aa).

The residue at position 11 (Ser11) is a Phosphoserine. A disordered region spans residues 100-189 (DPISDRESEG…SSDTEEDSLP (90 aa)). Positions 140-153 (QSSADDLTPSVTSH) are enriched in polar residues. The ELM2 domain occupies 195-292 (KEIMVGPQFQ…EALRRLRFNV (98 aa)). The SANT domain occupies 297–349 (DGLCAWSEEECRNFEHGFRVHGKNFHLIQANKVRTRSVGECVEYYYLWKKSER). The interval 364 to 464 (YVPSGTTDAD…YQPAVTAPEP (101 aa)) is disordered.

Part of a complex containing at least CDYL, MIER1, MIER2, HDAC1 and HDAC2.

It localises to the nucleus. In terms of biological role, transcriptional repressor. The protein is Mesoderm induction early response protein 2 (MIER2) of Homo sapiens (Human).